The primary structure comprises 275 residues: uncharacterized protein (275 aa).

The protein localises to the virion. This is an uncharacterized protein from Acanthamoeba polyphaga (Amoeba).